The chain runs to 113 residues: Large ribosomal subunit protein uL22 (113 aa).

Belongs to the universal ribosomal protein uL22 family. As to quaternary structure, part of the 50S ribosomal subunit.

Its function is as follows. This protein binds specifically to 23S rRNA; its binding is stimulated by other ribosomal proteins, e.g. L4, L17, and L20. It is important during the early stages of 50S assembly. It makes multiple contacts with different domains of the 23S rRNA in the assembled 50S subunit and ribosome. Functionally, the globular domain of the protein is located near the polypeptide exit tunnel on the outside of the subunit, while an extended beta-hairpin is found that lines the wall of the exit tunnel in the center of the 70S ribosome. In Chloroflexus aggregans (strain MD-66 / DSM 9485), this protein is Large ribosomal subunit protein uL22.